A 474-amino-acid chain; its full sequence is Trifunctional enzyme subunit beta, mitochondrial (474 aa).

The N-terminal 33 residues, 1–33, are a transit peptide targeting the mitochondrion; that stretch reads MTILTYPFKNLPTASKWALRFSIRPLSCSSQLR. Lys72 carries the post-translational modification N6-acetyllysine; alternate. An N6-succinyllysine; alternate modification is found at Lys72. Cys138 acts as the Acyl-thioester intermediate in catalysis. Residues 173 to 220 lie within the membrane without spanning it; sequence IRHSRKMRKLMLDLNKAKSMGQRLSLISKFRFNFLAPELPAVSEFSTS. Lys188 carries the post-translational modification N6-acetyllysine; alternate. Lys188 is modified (N6-succinyllysine; alternate). Lys190, Lys272, and Lys291 each carry N6-succinyllysine. Lys293 bears the N6-acetyllysine; alternate mark. Lys293 carries the N6-succinyllysine; alternate modification. The residue at position 298 (Lys298) is an N6-acetyllysine. Lys332 is subject to N6-acetyllysine; alternate. Residue Lys332 is modified to N6-succinyllysine; alternate. An N6-acetyllysine mark is found at Lys348 and Lys361. The active-site Proton donor/acceptor is Cys458.

It belongs to the thiolase-like superfamily. Thiolase family. Heterotetramer of 2 alpha/HADHA and 2 beta/HADHB subunits; forms the mitochondrial trifunctional enzyme. Also purified as higher order heterooligomers including a 4 alpha/HADHA and 4 beta/HADHB heterooligomer which physiological significance remains unclear. The mitochondrial trifunctional enzyme interacts with MTLN. Interacts with RSAD2/viperin.

It is found in the mitochondrion. It localises to the mitochondrion inner membrane. Its subcellular location is the mitochondrion outer membrane. The protein localises to the endoplasmic reticulum. It catalyses the reaction an acyl-CoA + acetyl-CoA = a 3-oxoacyl-CoA + CoA. It carries out the reaction butanoyl-CoA + acetyl-CoA = 3-oxohexanoyl-CoA + CoA. The enzyme catalyses hexanoyl-CoA + acetyl-CoA = 3-oxooctanoyl-CoA + CoA. The catalysed reaction is octanoyl-CoA + acetyl-CoA = 3-oxodecanoyl-CoA + CoA. It catalyses the reaction decanoyl-CoA + acetyl-CoA = 3-oxododecanoyl-CoA + CoA. It carries out the reaction dodecanoyl-CoA + acetyl-CoA = 3-oxotetradecanoyl-CoA + CoA. The enzyme catalyses tetradecanoyl-CoA + acetyl-CoA = 3-oxohexadecanoyl-CoA + CoA. It participates in lipid metabolism; fatty acid beta-oxidation. In terms of biological role, mitochondrial trifunctional enzyme catalyzes the last three of the four reactions of the mitochondrial beta-oxidation pathway. The mitochondrial beta-oxidation pathway is the major energy-producing process in tissues and is performed through four consecutive reactions breaking down fatty acids into acetyl-CoA. Among the enzymes involved in this pathway, the trifunctional enzyme exhibits specificity for long-chain fatty acids. Mitochondrial trifunctional enzyme is a heterotetrameric complex composed of two proteins, the trifunctional enzyme subunit alpha/HADHA carries the 2,3-enoyl-CoA hydratase and the 3-hydroxyacyl-CoA dehydrogenase activities, while the trifunctional enzyme subunit beta/HADHB described here bears the 3-ketoacyl-CoA thiolase activity. The sequence is that of Trifunctional enzyme subunit beta, mitochondrial (HADHB) from Homo sapiens (Human).